The following is a 353-amino-acid chain: Probable dual-specificity RNA methyltransferase RlmN (353 aa).

The Proton acceptor role is filled by Glu104. Residues 112–341 enclose the Radical SAM core domain; it reads DGGRKTICIS…ILNRRSPGKD (230 aa). Cys119 and Cys346 are joined by a disulfide. Cys126, Cys130, and Cys133 together coordinate [4Fe-4S] cluster. S-adenosyl-L-methionine-binding positions include 173–174, Ser205, 228–230, and Asn304; these read GE and SLN. Cys346 acts as the S-methylcysteine intermediate in catalysis.

It belongs to the radical SAM superfamily. RlmN family. [4Fe-4S] cluster serves as cofactor.

Its subcellular location is the cytoplasm. It carries out the reaction adenosine(2503) in 23S rRNA + 2 reduced [2Fe-2S]-[ferredoxin] + 2 S-adenosyl-L-methionine = 2-methyladenosine(2503) in 23S rRNA + 5'-deoxyadenosine + L-methionine + 2 oxidized [2Fe-2S]-[ferredoxin] + S-adenosyl-L-homocysteine. The enzyme catalyses adenosine(37) in tRNA + 2 reduced [2Fe-2S]-[ferredoxin] + 2 S-adenosyl-L-methionine = 2-methyladenosine(37) in tRNA + 5'-deoxyadenosine + L-methionine + 2 oxidized [2Fe-2S]-[ferredoxin] + S-adenosyl-L-homocysteine. Its function is as follows. Specifically methylates position 2 of adenine 2503 in 23S rRNA and position 2 of adenine 37 in tRNAs. This is Probable dual-specificity RNA methyltransferase RlmN from Leptospira interrogans serogroup Icterohaemorrhagiae serovar Lai (strain 56601).